The primary structure comprises 291 residues: ATP phosphoribosyltransferase 1 (291 aa).

Belongs to the ATP phosphoribosyltransferase family. Long subfamily. It depends on Mg(2+) as a cofactor.

It localises to the cytoplasm. The enzyme catalyses 1-(5-phospho-beta-D-ribosyl)-ATP + diphosphate = 5-phospho-alpha-D-ribose 1-diphosphate + ATP. It participates in amino-acid biosynthesis; L-histidine biosynthesis; L-histidine from 5-phospho-alpha-D-ribose 1-diphosphate: step 1/9. Its activity is regulated as follows. Feedback inhibited by histidine. Functionally, catalyzes the condensation of ATP and 5-phosphoribose 1-diphosphate to form N'-(5'-phosphoribosyl)-ATP (PR-ATP). Has a crucial role in the pathway because the rate of histidine biosynthesis seems to be controlled primarily by regulation of HisG enzymatic activity. This is ATP phosphoribosyltransferase 1 from Geobacter sulfurreducens (strain ATCC 51573 / DSM 12127 / PCA).